We begin with the raw amino-acid sequence, 395 residues long: Serine-type anaerobic sulfatase-maturating enzyme (395 aa).

The region spanning 18 to 249 (PRSPVPFHIL…QWRKRCDRGR (232 aa)) is the Radical SAM core domain. Residues C35 and C39 each contribute to the [4Fe-4S] cluster site. Y41 provides a ligand contact to S-adenosyl-L-methionine. C42 contributes to the [4Fe-4S] cluster binding site. The S-adenosyl-L-methionine site is built by G84 and R152. [4Fe-4S] cluster is bound by residues C270, C276, and C291. Residue D292 is the Proton acceptor of the active site. 5 residues coordinate [4Fe-4S] cluster: C331, C334, C340, C344, and C357.

The protein belongs to the radical SAM superfamily. Anaerobic sulfatase-maturating enzyme family. In terms of assembly, monomer. Interacts with AtsA prior to its export to the periplasm. This interaction depends on the presence of AtsA 'Ser-72'. Binding of SAM to AtsB promotes the formation of a ternary AtsA-AtsB-SAM complex. [4Fe-4S] cluster serves as cofactor.

The protein resides in the cytoplasm. The catalysed reaction is L-seryl-[sulfatase] + S-adenosyl-L-methionine = 3-oxo-L-alanyl-[sulfatase] + 5'-deoxyadenosine + L-methionine + H(+). It participates in protein modification; sulfatase oxidation. Activity is inhibited by iron chelators. Its function is as follows. Involved in 'Ser-type' sulfatase maturation under anaerobic conditions. Catalyzes the post-translational modification of serine ('Ser-72' in the arylsulfatase AtsA) into 3-oxoalanine (also known as C(alpha)-formylglycine (FGly)), by a free radical chemical mechanism initiated via the reductive cleavage of S-adenosyl-L-methionine (SAM). Is capable of catalyzing multiple turnovers. In vitro, use of a peptide substrate in which the target serine is changed to cysteine also gives rise to turnover, supporting approximately 4-fold the activity of that observed with the natural substrate. The chain is Serine-type anaerobic sulfatase-maturating enzyme from Klebsiella pneumoniae.